The primary structure comprises 319 residues: HTH-type transcriptional regulator YidZ (319 aa).

In terms of domain architecture, HTH lysR-type spans 8 to 65 (LDLNLLLCLQLLMQERSVTKAAKRMNVTPSAVSKSLAKLRAWFDDPLFVNTPLGLAPT). A DNA-binding region (H-T-H motif) is located at residues 25–44 (VTKAAKRMNVTPSAVSKSLA).

The protein belongs to the LysR transcriptional regulatory family.

Involved in anaerobic NO protection. The sequence is that of HTH-type transcriptional regulator YidZ from Salmonella heidelberg (strain SL476).